We begin with the raw amino-acid sequence, 461 residues long: Cysteine--tRNA ligase (461 aa).

C29 provides a ligand contact to Zn(2+). A 'HIGH' region motif is present at residues 31 to 41; sequence MTVYDFCHIGH. 3 residues coordinate Zn(2+): C210, H235, and E239. The 'KMSKS' region signature appears at 267–271; it reads KMSKS. K270 lines the ATP pocket.

This sequence belongs to the class-I aminoacyl-tRNA synthetase family. Monomer. Zn(2+) serves as cofactor.

The protein localises to the cytoplasm. The enzyme catalyses tRNA(Cys) + L-cysteine + ATP = L-cysteinyl-tRNA(Cys) + AMP + diphosphate. The polypeptide is Cysteine--tRNA ligase (Ectopseudomonas mendocina (strain ymp) (Pseudomonas mendocina)).